A 347-amino-acid polypeptide reads, in one-letter code: UDP-rhamnose/UDP-galactose transporter 1 (347 aa).

10 helical membrane passes run 11–31 (AVSDVGAWAMNVISSVGIIMA), 43–63 (FGFATTLTGFHFAFTALVGMV), 80–100 (LLWFSIVANISIAAMNFSLML), 103–123 (VGFYQISKLSMIPVVCVLEWI), 132–152 (EVKASVMVVVIGVGICTVTDV), 159–179 (FICACTAVFSTSLQQISIGSL), 195–215 (APIQAISLLICGPFVDYLLSG), 223–243 (MTYGAIFCILLSCALAVFCNI), 256–276 (SFQVLGHMKTVCVLTLGWLLF), and 285–305 (IAGMAIAIVGMVIYSWAVDIE).

Belongs to the TPT transporter family. TPT (TC 2.A.7.9) subfamily. Widely expressed in the whole plant.

The protein localises to the golgi apparatus membrane. Functionally, nucleotide-sugar transporter that transports UDP-rhamnose or UDP-galactose and UMP in a strict counter-exchange mode. The polypeptide is UDP-rhamnose/UDP-galactose transporter 1 (Arabidopsis thaliana (Mouse-ear cress)).